The sequence spans 121 residues: Small ribosomal subunit protein uS13 (121 aa).

The interval 91 to 121 (HRRGLPVRGQKTKNNARTRKGPVKTVANKKK) is disordered.

Belongs to the universal ribosomal protein uS13 family. Part of the 30S ribosomal subunit. Forms a loose heterodimer with protein S19. Forms two bridges to the 50S subunit in the 70S ribosome.

Functionally, located at the top of the head of the 30S subunit, it contacts several helices of the 16S rRNA. In the 70S ribosome it contacts the 23S rRNA (bridge B1a) and protein L5 of the 50S subunit (bridge B1b), connecting the 2 subunits; these bridges are implicated in subunit movement. Contacts the tRNAs in the A and P-sites. The chain is Small ribosomal subunit protein uS13 from Staphylococcus epidermidis (strain ATCC 35984 / DSM 28319 / BCRC 17069 / CCUG 31568 / BM 3577 / RP62A).